The following is a 321-amino-acid chain: GTP 3',8-cyclase (321 aa).

In terms of domain architecture, Radical SAM core spans Ser-5 to Glu-233. Residue Arg-14 participates in GTP binding. The [4Fe-4S] cluster site is built by Cys-21 and Cys-25. Residue Tyr-27 coordinates S-adenosyl-L-methionine. Cys-28 serves as a coordination point for [4Fe-4S] cluster. GTP is bound at residue Arg-64. Residue Gly-68 coordinates S-adenosyl-L-methionine. Ser-95 serves as a coordination point for GTP. Ser-119 lines the S-adenosyl-L-methionine pocket. Lys-155 is a GTP binding site. Residue Met-189 participates in S-adenosyl-L-methionine binding. [4Fe-4S] cluster is bound by residues Cys-249 and Cys-252. Residue Arg-254–Arg-256 coordinates GTP. Cys-266 serves as a coordination point for [4Fe-4S] cluster.

Belongs to the radical SAM superfamily. MoaA family. In terms of assembly, monomer and homodimer. [4Fe-4S] cluster serves as cofactor.

The catalysed reaction is GTP + AH2 + S-adenosyl-L-methionine = (8S)-3',8-cyclo-7,8-dihydroguanosine 5'-triphosphate + 5'-deoxyadenosine + L-methionine + A + H(+). It functions in the pathway cofactor biosynthesis; molybdopterin biosynthesis. In terms of biological role, catalyzes the cyclization of GTP to (8S)-3',8-cyclo-7,8-dihydroguanosine 5'-triphosphate. The sequence is that of GTP 3',8-cyclase from Helicobacter pylori (strain HPAG1).